Here is a 143-residue protein sequence, read N- to C-terminus: Large ribosomal subunit protein uL13 (143 aa).

Belongs to the universal ribosomal protein uL13 family. In terms of assembly, part of the 50S ribosomal subunit.

Functionally, this protein is one of the early assembly proteins of the 50S ribosomal subunit, although it is not seen to bind rRNA by itself. It is important during the early stages of 50S assembly. This chain is Large ribosomal subunit protein uL13, found in Neisseria gonorrhoeae (strain ATCC 700825 / FA 1090).